Reading from the N-terminus, the 439-residue chain is MQRRRGRTERARKRRRRSSGSRAVNESYRSEFIELRKWLKERKFEDTDLVPASFPGTGRGLMSKASLQEGQVMISLPESCLLTTDTVIRSSLGPYIKKWKPPVSPLLALCTFLVSEKHAGCRSLWKSYLDILPKSYTCPVCLEPEVVDLLPSPLKAKAEEQRARVQDLFTSARGFFSTLQPLFAEPVDSVFSYRAFLWAWCTVNTRAVYLRSRRQECLSAEPDTCALAPFLDLLNHSPHVQVKAAFNEKTRCYEIRTASRCRKHQEVFICYGPHDNQRLLLEYGFVSVRNPHACVPVSADMLVKFLPAADKQLHRKITILKDHGFTGNLTFGWDGPSWRLLTALKLLCLEAERFTSWKKVLLGEVISDTNEKTSLGVAQKICSDVIEETHAVLRKVSDMKEGTVSLRSQLSLVEALRMEELRILQASAEILSGLLAPFS.

Basic residues predominate over residues 1 to 19 (MQRRRGRTERARKRRRRSS). The segment at 1 to 25 (MQRRRGRTERARKRRRRSSGSRAVN) is disordered. The region spanning 47-272 (TDLVPASFPG…KHQEVFICYG (226 aa)) is the SET domain. Y271 is an S-adenosyl-L-methionine binding site.

This sequence belongs to the class V-like SAM-binding methyltransferase superfamily. SETD4 family. In terms of assembly, forms a ternary complex with TBK1 and ZNF268; the interaction with TBK1 is ZNF268-dependent and leads to TBK1 monomethylation. As to expression, expressed in the forebrain subventricular zone, in quiescent neural stem cells.

The protein localises to the cytoplasm. The protein resides in the cytosol. It is found in the nucleus. The catalysed reaction is L-lysyl(4)-[histone H3] + S-adenosyl-L-methionine = N(6)-methyl-L-lysyl(4)-[histone H3] + S-adenosyl-L-homocysteine + H(+). The enzyme catalyses N(6)-methyl-L-lysyl(4)-[histone H3] + S-adenosyl-L-methionine = N(6),N(6)-dimethyl-L-lysyl(4)-[histone H3] + S-adenosyl-L-homocysteine + H(+). It catalyses the reaction L-lysyl(20)-[histone H4] + S-adenosyl-L-methionine = N(6)-methyl-L-lysyl(20)-[histone H4] + S-adenosyl-L-homocysteine + H(+). It carries out the reaction N(6)-methyl-L-lysyl(20)-[histone H4] + S-adenosyl-L-methionine = N(6),N(6)-dimethyl-L-lysyl(20)-[histone H4] + S-adenosyl-L-homocysteine + H(+). The catalysed reaction is N(6),N(6)-dimethyl-L-lysyl(20)-[histone H4] + S-adenosyl-L-methionine = N(6),N(6),N(6)-trimethyl-L-lysyl(20)-[histone H4] + S-adenosyl-L-homocysteine + H(+). The enzyme catalyses L-lysyl-[protein] + S-adenosyl-L-methionine = N(6)-methyl-L-lysyl-[protein] + S-adenosyl-L-homocysteine + H(+). Protein-lysine N-methyltransferase that methylates both histones and non-histone proteins. Via its catalytic activity, regulates many processes, including cell proliferation, cell differentiation, inflammatory response and apoptosis. Regulates the inflammatory response by mediating mono- and dimethylation of 'Lys-4' of histone H3 (H3K4me1 and H3K4me2, respectively), leading to activate the transcription of pro-inflammatory cytokines IL6 and TNF-alpha. Also involved in the regulation of stem cell quiescence by catalyzing the trimethylation of 'Lys-20' of histone H4 (H4K20me3), thereby promoting heterochromatin formation. In the brain, epigenetically controls quiescence of neural stem cells for sustaining a protected neural stem cell population and maintaining a stem cell reservoir for neurogenesis. Involved in proliferation, migration, paracrine and myogenic differentiation of bone marrow mesenchymal stem cells (BMSCs). Through the catalysis of XRCC5/Ku70 trimethylation, regulates BAX-mediated apoptosis. SETD4-catalyzed XRCC5 methylation results in XRCC5 translocation to the cytoplasm, where it interacts with BAX, sequestering it from the mitochondria, hence preventing BAX-mediated apoptosis. The protein is SET domain-containing protein 4 of Mus musculus (Mouse).